The primary structure comprises 155 residues: 6,7-dimethyl-8-ribityllumazine synthase (155 aa).

Residues F23, 57–59, and 81–83 contribute to the 5-amino-6-(D-ribitylamino)uracil site; these read AFE and AVI. (2S)-2-hydroxy-3-oxobutyl phosphate is bound at residue 86 to 87; sequence ST. Catalysis depends on H89, which acts as the Proton donor. F114 lines the 5-amino-6-(D-ribitylamino)uracil pocket. R128 serves as a coordination point for (2S)-2-hydroxy-3-oxobutyl phosphate.

The protein belongs to the DMRL synthase family.

It catalyses the reaction (2S)-2-hydroxy-3-oxobutyl phosphate + 5-amino-6-(D-ribitylamino)uracil = 6,7-dimethyl-8-(1-D-ribityl)lumazine + phosphate + 2 H2O + H(+). It participates in cofactor biosynthesis; riboflavin biosynthesis; riboflavin from 2-hydroxy-3-oxobutyl phosphate and 5-amino-6-(D-ribitylamino)uracil: step 1/2. Catalyzes the formation of 6,7-dimethyl-8-ribityllumazine by condensation of 5-amino-6-(D-ribitylamino)uracil with 3,4-dihydroxy-2-butanone 4-phosphate. This is the penultimate step in the biosynthesis of riboflavin. This Dehalococcoides mccartyi (strain ATCC BAA-2266 / KCTC 15142 / 195) (Dehalococcoides ethenogenes (strain 195)) protein is 6,7-dimethyl-8-ribityllumazine synthase.